A 511-amino-acid polypeptide reads, in one-letter code: V-type proton ATPase subunit B, brain isoform (511 aa).

Arg400 is a binding site for ATP.

This sequence belongs to the ATPase alpha/beta chains family. In terms of assembly, V-ATPase is a heteromultimeric enzyme made up of two complexes: the ATP-hydrolytic V1 complex and the proton translocation V0 complex. The V1 complex consists of three catalytic AB heterodimers that form a heterohexamer, three peripheral stalks each consisting of EG heterodimers, one central rotor including subunits D and F, and the regulatory subunits C and H. The proton translocation complex V0 consists of the proton transport subunit a, a ring of proteolipid subunits c9c'', rotary subunit d, subunits e and f, and the accessory subunits ATP6AP1/Ac45 and ATP6AP2/PRR. In terms of tissue distribution, expressed in brain (at protein level). Expressed in all tissues tested, but highest in brain and in adrenal medulla.

It localises to the apical cell membrane. The protein resides in the melanosome. Its subcellular location is the cytoplasm. The protein localises to the cytoplasmic vesicle. It is found in the clathrin-coated vesicle membrane. It localises to the secretory vesicle. The protein resides in the synaptic vesicle membrane. In terms of biological role, non-catalytic subunit of the V1 complex of vacuolar(H+)-ATPase (V-ATPase), a multisubunit enzyme composed of a peripheral complex (V1) that hydrolyzes ATP and a membrane integral complex (V0) that translocates protons. V-ATPase is responsible for acidifying and maintaining the pH of intracellular compartments and in some cell types, is targeted to the plasma membrane, where it is responsible for acidifying the extracellular environment. In renal intercalated cells, can partially compensate the lack of ATP6V1B1 and mediate secretion of protons (H+) into the urine under base-line conditions but not in conditions of acid load. The chain is V-type proton ATPase subunit B, brain isoform (ATP6V1B2) from Bos taurus (Bovine).